The chain runs to 503 residues: D-alanine--D-alanyl carrier protein ligase (503 aa).

151-152 (TS) is an ATP binding site. D196 contacts D-alanine. 291 to 296 (NTYGPT) contacts ATP. V300 provides a ligand contact to D-alanine. Residues D382, 393–396 (YNGR), and K491 contribute to the ATP site. Position 491 (K491) interacts with D-alanine.

It belongs to the ATP-dependent AMP-binding enzyme family. DltA subfamily.

Its subcellular location is the cytoplasm. It carries out the reaction holo-[D-alanyl-carrier protein] + D-alanine + ATP = D-alanyl-[D-alanyl-carrier protein] + AMP + diphosphate. The protein operates within cell wall biogenesis; lipoteichoic acid biosynthesis. Functionally, catalyzes the first step in the D-alanylation of lipoteichoic acid (LTA), the activation of D-alanine and its transfer onto the D-alanyl carrier protein (Dcp) DltC. In an ATP-dependent two-step reaction, forms a high energy D-alanyl-AMP intermediate, followed by transfer of the D-alanyl residue as a thiol ester to the phosphopantheinyl prosthetic group of the Dcp. D-alanylation of LTA plays an important role in modulating the properties of the cell wall in Gram-positive bacteria, influencing the net charge of the cell wall. The sequence is that of D-alanine--D-alanyl carrier protein ligase from Bacillus anthracis (strain A0248).